Consider the following 466-residue polypeptide: Gamma-aminobutyric acid permease (466 aa).

At 2–20 the chain is on the cytoplasmic side; that stretch reads GQSSQPHELGGGLKSRHVT. 2 helical membrane passes run 21 to 41 and 42 to 62; these read MLSI…VAIA and EAGP…VMIM. Over 63 to 96 the chain is Cytoplasmic; it reads RMLAEMAVATPDTGSFSTYADKAIGRWAGYTIGW. A helical membrane pass occupies residues 97–117; it reads LYWWFWVLVIPLEANIAAMIL. A topological domain (periplasmic) is located at residue H118. The helical transmembrane segment at 119–139 threads the bilayer; it reads SWVPGIPIWLFSLVITLALTG. The Cytoplasmic segment spans residues 140–153; sequence SNLLSVKNYGEFEF. A helical transmembrane segment spans residues 154–174; sequence WLALCKVIAILAFIFLGAVAI. The Periplasmic portion of the chain corresponds to 175-199; sequence SGFYPYAEVSGISRLWDSGGFMPNG. The chain crosses the membrane as a helical span at residues 200–220; sequence FGAVLSAMLITMFSFMGAEIV. Residues 221–246 lie on the Cytoplasmic side of the membrane; sequence TIAAAESDTPEKHIVRATNSVIWRIS. A helical membrane pass occupies residues 247–267; it reads IFYLCSIFVVVALIPWNMPGL. At 268–286 the chain is on the periplasmic side; it reads KAVGSYRSVLELLNIPHAK. The chain crosses the membrane as a helical span at residues 287–307; that stretch reads LIMDCVILLSVTSCLNSALYT. The Cytoplasmic segment spans residues 308–334; it reads ASRMLYSLSRRGDAPAVMGKINRSKTP. Residues 335-355 form a helical membrane-spanning segment; the sequence is YVAVLLSTGAAFLTVVVNYYA. Topologically, residues 356 to 358 are periplasmic; sequence PAK. The chain crosses the membrane as a helical span at residues 359–379; it reads VFKFLIDSSGAIALLVYLVIA. Topologically, residues 380-402 are cytoplasmic; it reads VSQLRMRKILRAEGSEIRLRMWL. A helical transmembrane segment spans residues 403–423; that stretch reads YPWLTWLVIGFITFVLVVMLF. The Periplasmic segment spans residues 424-428; it reads RPAQQ. A helical transmembrane segment spans residues 429-449; that stretch reads LEVISTGLLAIGIICTVPIMA. The Cytoplasmic segment spans residues 450-466; that stretch reads RWKKLVLWQKTPVHNTR.

It belongs to the amino acid-polyamine-organocation (APC) superfamily. Amino acid transporter (AAT) (TC 2.A.3.1) family. In terms of assembly, monomer.

It localises to the cell inner membrane. The enzyme catalyses 4-aminobutanoate(in) + H(+)(in) = 4-aminobutanoate(out) + H(+)(out). It participates in amino-acid degradation; 4-aminobutanoate degradation. Its activity is regulated as follows. Uptake is stimulated by ammonium sulfate and abolished by 2,4-dinitrophenol. Is affected both topologically and kinetically by phospholipid composition of the membrane. In cells lacking phosphatidylethanolamine (PE), the N-terminal hairpin is inverted relative to the membrane and the rate of GABA transport is reduced by more than 99%. Its function is as follows. Transporter for gamma-aminobutyrate (GABA). Transport is driven by the membrane potential. Can also transport a number of GABA analogs such as nipecotic acid or muscimol. The sequence is that of Gamma-aminobutyric acid permease from Escherichia coli (strain K12).